Reading from the N-terminus, the 70-residue chain is Large ribosomal subunit protein uL29 (70 aa).

It belongs to the universal ribosomal protein uL29 family.

The polypeptide is Large ribosomal subunit protein uL29 (Prochlorococcus marinus (strain MIT 9211)).